The following is a 521-amino-acid chain: MREDLLLGFLLLGLLWEAPVVSSGPGKELPVVWAQEGAPVHLPCSLKSPNLDPNFLRRGGVIWQHQPDSGQPTPIPALDLHQGMPSPRQPAPGRYTVLSVAPGGLRSGRQPLHPHVQLEERGLQRGDFSLWLRPALRTDAGEYHATVRLPNRALSCSLRLRVGQASMIASPSGVLKLSDWVLLNCSFSRPDRPVSVHWFQGQNRVPVYNSPRHFLAETFLLLPQVSPLDSGTWGCVLTYRDGFNVSITYNLKVLGLEPVAPLTVYAAEGSRVELPCHLPPGVGTPSLLIAKWTPPGGGPELPVAGKSGNFTLHLEAVGLAQAGTYTCSIHLQGQQLNATVTLAVITVTPKSFGLPGSRGKLLCEVTPASGKERFVWRPLNNLSRSCPGPVLEIQEARLLAERWQCQLYEGQRLLGATVYAAESSSGAHSARRISGDLKGGHLVLVLILGALSLFLLVAGAFGFHWWRKQLLLRRFSALEHGIQPFPAQRKIEELERELETEMGQEPEPEPEPQLEPEPRQL.

A signal peptide spans 1 to 23; it reads MREDLLLGFLLLGLLWEAPVVSS. The Extracellular portion of the chain corresponds to 24–442; sequence GPGKELPVVW…ISGDLKGGHL (419 aa). The Ig-like V-type domain maps to 37–163; the sequence is GAPVHLPCSL…LSCSLRLRVG (127 aa). The segment at 37–246 is interaction with FGL1; it reads GAPVHLPCSL…LTYRDGFNVS (210 aa). Cys44 and Cys156 form a disulfide bridge. 3 Ig-like C2-type domains span residues 165–246, 258–341, and 345–412; these read ASMI…FNVS, PVAP…ATVT, and ITVT…EGQR. Asn184 carries an N-linked (GlcNAc...) asparagine glycan. A disulfide bridge links Cys185 with Cys235. N-linked (GlcNAc...) asparagine glycans are attached at residues Asn244, Asn309, Asn337, and Asn381. Cys276 and Cys327 are oxidised to a cystine. An intrachain disulfide couples Cys363 to Cys405. Residues 422-442 form a connecting peptide region; the sequence is ESSSGAHSARRISGDLKGGHL. Residues 443 to 463 form a helical membrane-spanning segment; sequence VLVLILGALSLFLLVAGAFGF. The Cytoplasmic portion of the chain corresponds to 464–521; that stretch reads HWWRKQLLLRRFSALEHGIQPFPAQRKIEELERELETEMGQEPEPEPEPQLEPEPRQL. The KIEELE motif motif lies at 490–495; it reads KIEELE. The 13 X 2 AA tandem repeats of E-X stretch occupies residues 493-518; it reads ELERELETEMGQEPEPEPEPQLEPEP. Residues 493 to 521 form a disordered region; the sequence is ELERELETEMGQEPEPEPEPQLEPEPRQL. The span at 500–514 shows a compositional bias: acidic residues; that stretch reads TEMGQEPEPEPEPQL.

Belongs to the LAG3 family. As to quaternary structure, interacts with MHC class II (MHC-II); selectively recognizes stable complexes of peptide and MHC-II. Interacts with FGL1 (via the Fibrinogen C-terminal domain). Post-translationally, proteolytically cleaved by ADAM10 and ADAM17 within the connecting peptide region, leading to release of Secreted lymphocyte activation gene 3 protein (sLAG-3). ADAM10 mediates constitutive cleavage, but cleavage increases following T-cell activation, whereas shedding by ADAM17 is induced by TCR signaling in a PRKCQ-dependent manner. As to expression, primarily expressed in activated CD4(+) and CD8(+) T-cells. Also expressed in a subset of regulatory T-cells (Tregs), such as natural CD4(+)CD25(+) Tregs. Also expressed on plasmacytoid dendritic cells (pDCs).

The protein localises to the cell membrane. It is found in the secreted. Functionally, lymphocyte activation gene 3 protein: Inhibitory receptor on antigen activated T-cells. Delivers inhibitory signals upon binding to ligands, such as FGL1. FGL1 constitutes a major ligand of LAG3 and is responsible for LAG3 T-cell inhibitory function. Following TCR engagement, LAG3 associates with CD3-TCR in the immunological synapse and directly inhibits T-cell activation. May inhibit antigen-specific T-cell activation in synergy with PDCD1/PD-1, possibly by acting as a coreceptor for PDCD1/PD-1. Negatively regulates the proliferation, activation, effector function and homeostasis of both CD8(+) and CD4(+) T-cells. Also mediates immune tolerance: constitutively expressed on a subset of regulatory T-cells (Tregs) and contributes to their suppressive function. Also acts as a negative regulator of plasmacytoid dendritic cell (pDCs) activation. Binds MHC class II (MHC-II); the precise role of MHC-II-binding is however unclear. May function as a ligand for MHC class II (MHC-II) on antigen-presenting cells (APC), promoting APC activation/maturation and driving Th1 immune response. This Mus musculus (Mouse) protein is Lymphocyte activation gene 3 protein.